Consider the following 801-residue polypeptide: Mitochondrial intermediate peptidase (801 aa).

Residues 1–41 (MKDQLLVPLRRRPWTCQKCLQRLQLPRHQTRRSFETAASPF) constitute a mitochondrion transit peptide. Residue histidine 564 coordinates Zn(2+). The active site involves glutamate 565. Histidine 568 and histidine 571 together coordinate Zn(2+).

It belongs to the peptidase M3 family. Requires Zn(2+) as cofactor.

It is found in the mitochondrion matrix. The enzyme catalyses Release of an N-terminal octapeptide as second stage of processing of some proteins imported into the mitochondrion.. Its function is as follows. Cleaves proteins, imported into the mitochondrion, to their mature size. While most mitochondrial precursor proteins are processed to the mature form in one step by mitochondrial processing peptidase (MPP), the sequential cleavage by MIP of an octapeptide after initial processing by MPP is a required step for a subgroup of nuclear-encoded precursor proteins destined for the matrix or the inner membrane. This Aspergillus fumigatus (strain ATCC MYA-4609 / CBS 101355 / FGSC A1100 / Af293) (Neosartorya fumigata) protein is Mitochondrial intermediate peptidase (oct1).